The sequence spans 148 residues: Sec-independent protein translocase protein TatB (148 aa).

A helical membrane pass occupies residues 1 to 21; that stretch reads MFDIGFWELVVIGIVALVVLG.

The protein belongs to the TatB family. In terms of assembly, the Tat system comprises two distinct complexes: a TatABC complex, containing multiple copies of TatA, TatB and TatC subunits, and a separate TatA complex, containing only TatA subunits. Substrates initially bind to the TatABC complex, which probably triggers association of the separate TatA complex to form the active translocon.

It localises to the cell inner membrane. Its function is as follows. Part of the twin-arginine translocation (Tat) system that transports large folded proteins containing a characteristic twin-arginine motif in their signal peptide across membranes. Together with TatC, TatB is part of a receptor directly interacting with Tat signal peptides. TatB may form an oligomeric binding site that transiently accommodates folded Tat precursor proteins before their translocation. This is Sec-independent protein translocase protein TatB from Aeromonas salmonicida (strain A449).